The following is a 92-amino-acid chain: Small ribosomal subunit protein uS19 (92 aa).

This sequence belongs to the universal ribosomal protein uS19 family.

Protein S19 forms a complex with S13 that binds strongly to the 16S ribosomal RNA. The protein is Small ribosomal subunit protein uS19 of Shigella boydii serotype 18 (strain CDC 3083-94 / BS512).